We begin with the raw amino-acid sequence, 221 residues long: Phosphoribosylformylglycinamidine synthase subunit PurQ (221 aa).

In terms of domain architecture, Glutamine amidotransferase type-1 spans 2-221 (KTAVIQFPGS…VFESLKTVKK (220 aa)). Cysteine 87 acts as the Nucleophile in catalysis. Active-site residues include histidine 195 and glutamate 197.

As to quaternary structure, part of the FGAM synthase complex composed of 1 PurL, 1 PurQ and 2 PurS subunits.

Its subcellular location is the cytoplasm. The catalysed reaction is N(2)-formyl-N(1)-(5-phospho-beta-D-ribosyl)glycinamide + L-glutamine + ATP + H2O = 2-formamido-N(1)-(5-O-phospho-beta-D-ribosyl)acetamidine + L-glutamate + ADP + phosphate + H(+). It catalyses the reaction L-glutamine + H2O = L-glutamate + NH4(+). Its pathway is purine metabolism; IMP biosynthesis via de novo pathway; 5-amino-1-(5-phospho-D-ribosyl)imidazole from N(2)-formyl-N(1)-(5-phospho-D-ribosyl)glycinamide: step 1/2. Its function is as follows. Part of the phosphoribosylformylglycinamidine synthase complex involved in the purines biosynthetic pathway. Catalyzes the ATP-dependent conversion of formylglycinamide ribonucleotide (FGAR) and glutamine to yield formylglycinamidine ribonucleotide (FGAM) and glutamate. The FGAM synthase complex is composed of three subunits. PurQ produces an ammonia molecule by converting glutamine to glutamate. PurL transfers the ammonia molecule to FGAR to form FGAM in an ATP-dependent manner. PurS interacts with PurQ and PurL and is thought to assist in the transfer of the ammonia molecule from PurQ to PurL. This is Phosphoribosylformylglycinamidine synthase subunit PurQ from Deinococcus radiodurans (strain ATCC 13939 / DSM 20539 / JCM 16871 / CCUG 27074 / LMG 4051 / NBRC 15346 / NCIMB 9279 / VKM B-1422 / R1).